The chain runs to 295 residues: Pyridoxal 5'-phosphate synthase subunit PdxS (295 aa).

A D-ribose 5-phosphate-binding site is contributed by aspartate 23. The active-site Schiff-base intermediate with D-ribose 5-phosphate is lysine 80. Glycine 152 is a binding site for D-ribose 5-phosphate. Arginine 164 is a D-glyceraldehyde 3-phosphate binding site. D-ribose 5-phosphate contacts are provided by residues glycine 213 and 234 to 235 (GS).

It belongs to the PdxS/SNZ family. As to quaternary structure, in the presence of PdxT, forms a dodecamer of heterodimers.

The catalysed reaction is aldehydo-D-ribose 5-phosphate + D-glyceraldehyde 3-phosphate + L-glutamine = pyridoxal 5'-phosphate + L-glutamate + phosphate + 3 H2O + H(+). Its pathway is cofactor biosynthesis; pyridoxal 5'-phosphate biosynthesis. In terms of biological role, catalyzes the formation of pyridoxal 5'-phosphate from ribose 5-phosphate (RBP), glyceraldehyde 3-phosphate (G3P) and ammonia. The ammonia is provided by the PdxT subunit. Can also use ribulose 5-phosphate and dihydroxyacetone phosphate as substrates, resulting from enzyme-catalyzed isomerization of RBP and G3P, respectively. The chain is Pyridoxal 5'-phosphate synthase subunit PdxS from Methanosphaera stadtmanae (strain ATCC 43021 / DSM 3091 / JCM 11832 / MCB-3).